We begin with the raw amino-acid sequence, 219 residues long: Probable GTP-binding protein EngB (219 aa).

The region spanning 31-205 (VGVEIAFAGR…LAILNEWCHP (175 aa)) is the EngB-type G domain. GTP is bound by residues 39 to 46 (GRSNAGKS), 66 to 70 (GRTQL), 84 to 87 (DLPG), 151 to 154 (TKSD), and 184 to 186 (FSS). 2 residues coordinate Mg(2+): Ser46 and Thr68.

The protein belongs to the TRAFAC class TrmE-Era-EngA-EngB-Septin-like GTPase superfamily. EngB GTPase family. Mg(2+) serves as cofactor.

Necessary for normal cell division and for the maintenance of normal septation. The polypeptide is Probable GTP-binding protein EngB (Shewanella baltica (strain OS223)).